Reading from the N-terminus, the 150-residue chain is N-alpha-acetyltransferase 30 (150 aa).

Positions 2 to 150 (VTIVPYSHQY…DAFRYILYPN (149 aa)) constitute an N-acetyltransferase domain.

The protein belongs to the acetyltransferase family. MAK3 subfamily.

It is found in the cytoplasm. The protein resides in the nucleus. It catalyses the reaction N-terminal L-methionyl-L-leucyl-[protein] + acetyl-CoA = N-terminal N(alpha)-acetyl-L-methionyl-L-leucyl-[protein] + CoA + H(+). The catalysed reaction is N-terminal L-methionyl-L-isoleucyl-[protein] + acetyl-CoA = N-terminal N(alpha)-acetyl-L-methionyl-L-isoleucyl-[protein] + CoA + H(+). The enzyme catalyses N-terminal L-methionyl-L-phenylalanyl-[protein] + acetyl-CoA = N-terminal N(alpha)-acetyl-L-methionyl-L-phenylalanyl-[protein] + CoA + H(+). It carries out the reaction N-terminal L-methionyl-L-tryptophyl-[protein] + acetyl-CoA = N-terminal N(alpha)-acetyl-L-methionyl-L-tryptophyl-[protein] + CoA + H(+). It catalyses the reaction N-terminal L-methionyl-L-tyrosyl-[protein] + acetyl-CoA = N-terminal N(alpha)-acetyl-L-methionyl-L-tyrosyl-[protein] + CoA + H(+). Its function is as follows. Catalytic component of the NatC N-terminal acetyltransferase. This chain is N-alpha-acetyltransferase 30 (naa30), found in Schizosaccharomyces pombe (strain 972 / ATCC 24843) (Fission yeast).